A 207-amino-acid chain; its full sequence is MKTKILSLANEEVGEISLNKDIFAVEFIRDDIIKQVIDWQRAKAMSGNHKTKTVSEVSGTTKKPFKQKGTGNARQGSLRSVQMRGGGLAHGPIVRSHATQLPKKVRKLGLIHALSEKFAEGKLLVIDSLKLDKPKTSFLVNILNKFQGQSFFVIDGNEVDINFSLAAKNIYNTVIVPQIGANVYDIIRHEYVLLSQEAVNVLEERLR.

The segment at 50–76 is disordered; it reads KTKTVSEVSGTTKKPFKQKGTGNARQG.

The protein belongs to the universal ribosomal protein uL4 family. In terms of assembly, part of the 50S ribosomal subunit.

Its function is as follows. One of the primary rRNA binding proteins, this protein initially binds near the 5'-end of the 23S rRNA. It is important during the early stages of 50S assembly. It makes multiple contacts with different domains of the 23S rRNA in the assembled 50S subunit and ribosome. Forms part of the polypeptide exit tunnel. The chain is Large ribosomal subunit protein uL4 from Rickettsia canadensis (strain McKiel).